Reading from the N-terminus, the 374-residue chain is Chaperone protein DnaJ (374 aa).

Residues 5-70 (DYYEVLGVAR…DKRARYDRFG (66 aa)) form the J domain. The segment at 135–213 (GDEVTLRLPK…CKGSGILQQV (79 aa)) adopts a CR-type zinc-finger fold. 8 residues coordinate Zn(2+): Cys-148, Cys-151, Cys-165, Cys-168, Cys-187, Cys-190, Cys-201, and Cys-204. CXXCXGXG motif repeat units lie at residues 148–155 (CDECNGSG), 165–172 (CRHCGGNG), 187–194 (CPVCRGEG), and 201–208 (CPKCKGSG).

Belongs to the DnaJ family. As to quaternary structure, homodimer. Zn(2+) serves as cofactor.

Its subcellular location is the cytoplasm. Its function is as follows. Participates actively in the response to hyperosmotic and heat shock by preventing the aggregation of stress-denatured proteins and by disaggregating proteins, also in an autonomous, DnaK-independent fashion. Unfolded proteins bind initially to DnaJ; upon interaction with the DnaJ-bound protein, DnaK hydrolyzes its bound ATP, resulting in the formation of a stable complex. GrpE releases ADP from DnaK; ATP binding to DnaK triggers the release of the substrate protein, thus completing the reaction cycle. Several rounds of ATP-dependent interactions between DnaJ, DnaK and GrpE are required for fully efficient folding. Also involved, together with DnaK and GrpE, in the DNA replication of plasmids through activation of initiation proteins. The sequence is that of Chaperone protein DnaJ from Nitratidesulfovibrio vulgaris (strain DSM 19637 / Miyazaki F) (Desulfovibrio vulgaris).